The primary structure comprises 228 residues: Tumor necrosis factor receptor superfamily member 18 (228 aa).

The signal sequence occupies residues 1–19; the sequence is MGAWAMLYGVSMLCVLDLG. Over 20–153 the chain is Extracellular; the sequence is QPSVVEEPGC…EPLPTEQYGH (134 aa). TNFR-Cys repeat units follow at residues 28 to 61, 62 to 101, and 102 to 142; these read GCGP…ERCI, CVTP…FRCV, and ACAM…AVCI. Intrachain disulfides connect Cys-29-Cys-44, Cys-62-Cys-74, Cys-69-Cys-82, Cys-103-Cys-122, and Cys-116-Cys-141. N-linked (GlcNAc...) asparagine glycosylation is found at Asn-36 and Asn-40. Residues Asn-121 and Asn-134 are each glycosylated (N-linked (GlcNAc...) asparagine). A helical membrane pass occupies residues 154–174; the sequence is LTVIFLVMAACIFFLTTVQLG. The Cytoplasmic segment spans residues 175–228; sequence LHIWQLRRQHMCPRETQPFAEVQLSAEDACSFQFPEEERGEQTEEKCHLGGRWP.

As to quaternary structure, binds to TRAF1, TRAF2, and TRAF3, but not TRAF5 and TRAF6. Binds through its C-terminus to SIVA1/SIVA. Preferentially expressed in activated T lymphocytes.

The protein localises to the cell membrane. The protein resides in the secreted. In terms of biological role, receptor for TNFSF18. Seems to be involved in interactions between activated T-lymphocytes and endothelial cells and in the regulation of T-cell receptor-mediated cell death. Mediated NF-kappa-B activation via the TRAF2/NIK pathway. In Mus musculus (Mouse), this protein is Tumor necrosis factor receptor superfamily member 18 (Tnfrsf18).